Consider the following 394-residue polypeptide: MSKEKFERTKPHVNVGTIGHVDHGKTTLTAAITTVLAKTYGGAARAFDQIDNAPEEKARGITINTSHVEYDTPTRHYAHVDCPGHADYVKNMITGAAQMDGAILVVAATDGPMPQTREHILLGRQVGVPYIIVFLNKCDMVDDEELLELVEMEVRELLSQYDFPGDDTPIVRGSALKALEGDAEWEAKIIELAGFLDSYIPEPERAIDKPFLLPIEDVFSISGRGTVVTGRVERGIIKVGEEVEIVGIKETQKSTCTGVEMFRKLLDEGRAGENVGVLLRGIKREEIERGQVLAKPGTIKPHTKFESEVYILSKDEGGRHTPFFKGYRPQFYFRTTDVTGTIELPEGVEMVMPGDNIKMVVTLIHPIAMDDGLRFAIREGGRTVGAGVVAKVLG.

A tr-type G domain is found at Lys-10–Glu-204. The G1 stretch occupies residues Gly-19 to Thr-26. Gly-19–Thr-26 lines the GTP pocket. Position 26 (Thr-26) interacts with Mg(2+). Positions Gly-60–Asn-64 are G2. The tract at residues Asp-81–Gly-84 is G3. GTP is bound by residues Asp-81–His-85 and Asn-136–Asp-139. The tract at residues Asn-136 to Asp-139 is G4. Residues Ser-174–Leu-176 are G5.

It belongs to the TRAFAC class translation factor GTPase superfamily. Classic translation factor GTPase family. EF-Tu/EF-1A subfamily. As to quaternary structure, monomer.

Its subcellular location is the cytoplasm. The enzyme catalyses GTP + H2O = GDP + phosphate + H(+). Its function is as follows. GTP hydrolase that promotes the GTP-dependent binding of aminoacyl-tRNA to the A-site of ribosomes during protein biosynthesis. The sequence is that of Elongation factor Tu from Salmonella arizonae (strain ATCC BAA-731 / CDC346-86 / RSK2980).